The primary structure comprises 355 residues: Capsid protein VP1/VP2 (355 aa).

Basic and acidic residues predominate over residues 1–21; that stretch reads MADSTTMEHDGRGTKRKREAD. Positions 1 to 41 are disordered; the sequence is MADSTTMEHDGRGTKRKREADGGSGQGVGKGNSNAVKEGYG.

Belongs to the parvoviridae capsid protein family.

It localises to the virion. Its function is as follows. Capsid protein self-assembles to form an icosahedral capsid with a T=1 symmetry, about 22 nm in diameter, and consisting of 60 copies of size variants of the capsid proteins, which differ in the N-terminushe capsid encapsulates the genomic ssDNA. Capsid proteins are responsible for the attachment to host cell receptors. This attachment induces virion internalization predominantly through clathrin-dependent endocytosis. This Aedes albopictus densovirus (isolate Boublik/1994) (AalDNV) protein is Capsid protein VP1/VP2 (VP).